The primary structure comprises 333 residues: Phosphoribosylformylglycinamidine cyclo-ligase (333 aa).

This sequence belongs to the AIR synthase family.

It is found in the cytoplasm. It carries out the reaction 2-formamido-N(1)-(5-O-phospho-beta-D-ribosyl)acetamidine + ATP = 5-amino-1-(5-phospho-beta-D-ribosyl)imidazole + ADP + phosphate + H(+). The protein operates within purine metabolism; IMP biosynthesis via de novo pathway; 5-amino-1-(5-phospho-D-ribosyl)imidazole from N(2)-formyl-N(1)-(5-phospho-D-ribosyl)glycinamide: step 2/2. The protein is Phosphoribosylformylglycinamidine cyclo-ligase of Methanosarcina mazei (strain ATCC BAA-159 / DSM 3647 / Goe1 / Go1 / JCM 11833 / OCM 88) (Methanosarcina frisia).